The sequence spans 117 residues: Glycoprotein hormones alpha chain (117 aa).

The N-terminal stretch at 1–23 (MGSVKSAGLSLLLLSFLLYVADS) is a signal peptide. Disulfide bonds link Cys34-Cys57, Cys37-Cys86, Cys54-Cys107, Cys58-Cys109, and Cys85-Cys112. N-linked (GlcNAc...) asparagine glycans are attached at residues Asn78 and Asn103.

The protein belongs to the glycoprotein hormones subunit alpha family. In terms of assembly, heterodimer. Glycoprotein hormones are heterodimers composed of a common alpha chain described here and a unique beta chain which confers their biological specificity to the different hormones.

The protein resides in the secreted. Functionally, shared alpha chain of heterodimeric glycoprotein hormones. These hormones bind specific receptors on target cells that in turn activate downstream signaling pathways. Involved in gametogenesis and steroidogenesis. The polypeptide is Glycoprotein hormones alpha chain (cga) (Acanthopagrus latus (Yellowfin seabream)).